We begin with the raw amino-acid sequence, 245 residues long: tRNA pseudouridine synthase A (245 aa).

D52 acts as the Nucleophile in catalysis. A substrate-binding site is contributed by Y111.

This sequence belongs to the tRNA pseudouridine synthase TruA family. Homodimer.

It catalyses the reaction uridine(38/39/40) in tRNA = pseudouridine(38/39/40) in tRNA. Formation of pseudouridine at positions 38, 39 and 40 in the anticodon stem and loop of transfer RNAs. The chain is tRNA pseudouridine synthase A from Rickettsia typhi (strain ATCC VR-144 / Wilmington).